Here is a 426-residue protein sequence, read N- to C-terminus: Glutamate-1-semialdehyde 2,1-aminomutase (426 aa).

N6-(pyridoxal phosphate)lysine is present on lysine 265.

Belongs to the class-III pyridoxal-phosphate-dependent aminotransferase family. HemL subfamily. As to quaternary structure, homodimer. The cofactor is pyridoxal 5'-phosphate.

Its subcellular location is the cytoplasm. The catalysed reaction is (S)-4-amino-5-oxopentanoate = 5-aminolevulinate. It participates in porphyrin-containing compound metabolism; protoporphyrin-IX biosynthesis; 5-aminolevulinate from L-glutamyl-tRNA(Glu): step 2/2. The polypeptide is Glutamate-1-semialdehyde 2,1-aminomutase (Yersinia pestis bv. Antiqua (strain Antiqua)).